The primary structure comprises 198 residues: Peroxiredoxin-2 (198 aa).

A2 carries the N-acetylalanine modification. The region spanning 6 to 164 (AHIGKPAPDF…ALRLVQAFQY (159 aa)) is the Thioredoxin domain. Residue C51 is the Cysteine sulfenic acid (-SOH) intermediate of the active site. The residue at position 112 (S112) is a Phosphoserine. T182 is modified (phosphothreonine). N6-acetyllysine is present on K196.

The protein belongs to the peroxiredoxin family. AhpC/Prx1 subfamily. In terms of assembly, homodimer; disulfide-linked, upon oxidation. 5 homodimers assemble to form a ring-like decamer. Interacts with TIPIN. The enzyme can be inactivated by further oxidation of the cysteine sulfenic acid (C(P)-SOH) to sulphinic acid (C(P)-SO2H) instead of its condensation to a disulfide bond. It can be reactivated by forming a transient disulfide bond with sulfiredoxin SRXN1, which reduces the cysteine sulfinic acid in an ATP- and Mg-dependent manner. Post-translationally, acetylation increases resistance to transition to high molecular-mass complexes. Deacetylated by HDAC6 which decreases reducing activity.

It localises to the cytoplasm. It carries out the reaction a hydroperoxide + [thioredoxin]-dithiol = an alcohol + [thioredoxin]-disulfide + H2O. Functionally, thiol-specific peroxidase that catalyzes the reduction of hydrogen peroxide and organic hydroperoxides to water and alcohols, respectively. Plays a role in cell protection against oxidative stress by detoxifying peroxides and as sensor of hydrogen peroxide-mediated signaling events. Might participate in the signaling cascades of growth factors and tumor necrosis factor-alpha by regulating the intracellular concentrations of H(2)O(2). The polypeptide is Peroxiredoxin-2 (Prdx2) (Rattus norvegicus (Rat)).